The sequence spans 188 residues: Auxin-induced protein 22C (188 aa).

The EAR-like (transcriptional repression) signature appears at 13–17; that stretch reads LRLGL. The segment at 16-57 is disordered; sequence GLPGAGGENNTDKDKNKNKKRVFSDIEGENSSSEEDGKKETK. Residues 79–167 form the PB1 domain; the sequence is KLYVKVSMDG…KRLRIMKRSD (89 aa).

Belongs to the Aux/IAA family. As to quaternary structure, homodimers and heterodimers.

The protein localises to the nucleus. Functionally, aux/IAA proteins are short-lived transcriptional factors that function as repressors of early auxin response genes at low auxin concentrations. Repression is thought to result from the interaction with auxin response factors (ARFs), proteins that bind to the auxin-responsive promoter element (AuxRE). Formation of heterodimers with ARF proteins may alter their ability to modulate early auxin response genes expression. In Vigna radiata var. radiata (Mung bean), this protein is Auxin-induced protein 22C (AUX22C).